Reading from the N-terminus, the 190-residue chain is Inner membrane-spanning protein YciB (190 aa).

Transmembrane regions (helical) follow at residues 22 to 42 (IYVATGALIVATAIQIVLTFA), 50 to 70 (MQLITFAMVAIFGGMTIFLHD), 76 to 96 (WKVTIVYAIFAIGLAVSHAMG), 118 to 138 (INWAWVAFFSFCAGLNVYVAF), and 148 to 168 (FKVFGLLIATFAYMIATGFYI).

The protein belongs to the YciB family.

Its subcellular location is the cell inner membrane. Plays a role in cell envelope biogenesis, maintenance of cell envelope integrity and membrane homeostasis. This Vibrio campbellii (strain ATCC BAA-1116) protein is Inner membrane-spanning protein YciB.